Reading from the N-terminus, the 186-residue chain is Elongation factor P (186 aa).

It belongs to the elongation factor P family.

Its subcellular location is the cytoplasm. It participates in protein biosynthesis; polypeptide chain elongation. Functionally, involved in peptide bond synthesis. Stimulates efficient translation and peptide-bond synthesis on native or reconstituted 70S ribosomes in vitro. Probably functions indirectly by altering the affinity of the ribosome for aminoacyl-tRNA, thus increasing their reactivity as acceptors for peptidyl transferase. This chain is Elongation factor P, found in Prochlorococcus marinus (strain MIT 9312).